Here is a 133-residue protein sequence, read N- to C-terminus: uncharacterized protein (133 aa).

An N-terminal signal peptide occupies residues 1–23 (MSRKIIPALTIFFGPILILTAIT). Residues 82–133 (ESIKNQNSLNKEKQQQQQQQQQQQQQQQQQQQQQQKPNTPPTPLTTPSTPKK) form a disordered region. Residues 96 to 118 (QQQQQQQQQQQQQQQQQQQQQKP) show a composition bias toward low complexity.

It localises to the secreted. This is an uncharacterized protein from Dictyostelium discoideum (Social amoeba).